The chain runs to 284 residues: Nucleotide-binding protein SPO0713 (284 aa).

3–10 (GPSGAGRS) serves as a coordination point for ATP. 50 to 53 (DARN) is a binding site for GTP.

This sequence belongs to the RapZ-like family.

Its function is as follows. Displays ATPase and GTPase activities. The chain is Nucleotide-binding protein SPO0713 from Ruegeria pomeroyi (strain ATCC 700808 / DSM 15171 / DSS-3) (Silicibacter pomeroyi).